The following is a 309-amino-acid chain: MPIRVLDELPAVNFLREENVFVMTTSRATGQEIRPLKVIILNLMPKKIETENQFLRLLSNSPLQVDIQLLRIDARESRNTPAEHLNNFYCNFEDICDQNFDGLIVTGAPLGLVEFNDVAYWPQIRQVLEWAKDHVTSTLFVCWAVQAALNILYGIPKQTRTDKLSGVYEHHILHPYALLTRGFDDTFLAPHSRYADFPAALIRDYTDLEILAETEGGDAYLFASKDKRIAFVTGHPEYDAHTLAGEYFRDVEAGLNPDIPYNYFPKNDPQNKPRATWRSHGNLLFTNWLNYYVYQITPYDLRHMNPTLD.

Residue C142 is the Acyl-thioester intermediate of the active site. Residues K163 and S192 each contribute to the substrate site. The active-site Proton acceptor is H235. E237 is a catalytic residue. Substrate is bound at residue R249.

Belongs to the MetA family. In terms of assembly, homodimer.

It is found in the cytoplasm. The enzyme catalyses L-homoserine + succinyl-CoA = O-succinyl-L-homoserine + CoA. The protein operates within amino-acid biosynthesis; L-methionine biosynthesis via de novo pathway; O-succinyl-L-homoserine from L-homoserine: step 1/1. In terms of biological role, transfers a succinyl group from succinyl-CoA to L-homoserine, forming succinyl-L-homoserine. The chain is Homoserine O-succinyltransferase from Salmonella arizonae (strain ATCC BAA-731 / CDC346-86 / RSK2980).